A 99-amino-acid chain; its full sequence is Large ribosomal subunit protein eL30 (99 aa).

This sequence belongs to the eukaryotic ribosomal protein eL30 family.

The chain is Large ribosomal subunit protein eL30 from Methanobrevibacter smithii (strain ATCC 35061 / DSM 861 / OCM 144 / PS).